Here is a 657-residue protein sequence, read N- to C-terminus: L-type lectin-domain containing receptor kinase I.8 (657 aa).

An N-terminal signal peptide occupies residues 1–23 (MAPGLDLIWMVISFLLLIHLSSQ). Topologically, residues 24 to 282 (QETGFSFNGF…QVPHPKMKTS (259 aa)) are extracellular. The interval 25 to 257 (ETGFSFNGFR…NHYILGWSFS (233 aa)) is legume-lectin like. Asparagine 74, asparagine 124, asparagine 181, asparagine 204, and asparagine 225 each carry an N-linked (GlcNAc...) asparagine glycan. Residues 283-303 (LLLILLLIVLGIILLVLLVGA) form a helical membrane-spanning segment. Residues 304–657 (YLYRRNKYAE…THSIQYGIGR (354 aa)) lie on the Cytoplasmic side of the membrane. The 273-residue stretch at 339–611 (FHKDGFLGKG…VQYLDRQVSL (273 aa)) folds into the Protein kinase domain. ATP-binding positions include 345–353 (LGKGGFGEV) and lysine 366. Aspartate 462 functions as the Proton acceptor in the catalytic mechanism.

The protein in the C-terminal section; belongs to the protein kinase superfamily. Ser/Thr protein kinase family. It in the N-terminal section; belongs to the leguminous lectin family.

The protein resides in the cell membrane. The enzyme catalyses L-seryl-[protein] + ATP = O-phospho-L-seryl-[protein] + ADP + H(+). The catalysed reaction is L-threonyl-[protein] + ATP = O-phospho-L-threonyl-[protein] + ADP + H(+). Involved in resistance response to the pathogenic fungus Alternaria brassicicola. This is L-type lectin-domain containing receptor kinase I.8 from Arabidopsis thaliana (Mouse-ear cress).